A 323-amino-acid polypeptide reads, in one-letter code: tRNA U34 carboxymethyltransferase (323 aa).

Residues Lys-91, Trp-105, Lys-110, Gly-130, 152–154 (DPS), 181–182 (IE), Met-196, Tyr-200, and Arg-315 each bind carboxy-S-adenosyl-L-methionine.

Belongs to the class I-like SAM-binding methyltransferase superfamily. CmoB family. As to quaternary structure, homotetramer.

It carries out the reaction carboxy-S-adenosyl-L-methionine + 5-hydroxyuridine(34) in tRNA = 5-carboxymethoxyuridine(34) in tRNA + S-adenosyl-L-homocysteine + H(+). In terms of biological role, catalyzes carboxymethyl transfer from carboxy-S-adenosyl-L-methionine (Cx-SAM) to 5-hydroxyuridine (ho5U) to form 5-carboxymethoxyuridine (cmo5U) at position 34 in tRNAs. This chain is tRNA U34 carboxymethyltransferase, found in Vibrio atlanticus (strain LGP32) (Vibrio splendidus (strain Mel32)).